A 224-amino-acid chain; its full sequence is UPF0758 protein PD_0117 (224 aa).

Residues 102-224 (SIHDPISAGR…PVSFAEHGWL (123 aa)) form the MPN domain. 3 residues coordinate Zn(2+): histidine 173, histidine 175, and aspartate 186. Positions 173–186 (HNHPSGNREPSPAD) match the JAMM motif motif.

The protein belongs to the UPF0758 family.

This Xylella fastidiosa (strain Temecula1 / ATCC 700964) protein is UPF0758 protein PD_0117.